A 258-amino-acid chain; its full sequence is 1-(5-phosphoribosyl)-5-[(5-phosphoribosylamino)methylideneamino] imidazole-4-carboxamide isomerase (258 aa).

Catalysis depends on Asp9, which acts as the Proton acceptor. The active-site Proton donor is the Asp131.

This sequence belongs to the HisA/HisF family.

Its subcellular location is the cytoplasm. The enzyme catalyses 1-(5-phospho-beta-D-ribosyl)-5-[(5-phospho-beta-D-ribosylamino)methylideneamino]imidazole-4-carboxamide = 5-[(5-phospho-1-deoxy-D-ribulos-1-ylimino)methylamino]-1-(5-phospho-beta-D-ribosyl)imidazole-4-carboxamide. The protein operates within amino-acid biosynthesis; L-histidine biosynthesis; L-histidine from 5-phospho-alpha-D-ribose 1-diphosphate: step 4/9. This Salinibacter ruber (strain DSM 13855 / M31) protein is 1-(5-phosphoribosyl)-5-[(5-phosphoribosylamino)methylideneamino] imidazole-4-carboxamide isomerase.